A 122-amino-acid chain; its full sequence is Large ribosomal subunit protein uL14 (122 aa).

This sequence belongs to the universal ribosomal protein uL14 family. Part of the 50S ribosomal subunit. Forms a cluster with proteins L3 and L19. In the 70S ribosome, L14 and L19 interact and together make contacts with the 16S rRNA in bridges B5 and B8.

Its function is as follows. Binds to 23S rRNA. Forms part of two intersubunit bridges in the 70S ribosome. This Desulfotalea psychrophila (strain LSv54 / DSM 12343) protein is Large ribosomal subunit protein uL14.